The sequence spans 252 residues: TVP38/TMEM64 family membrane protein Mb1528c (252 aa).

6 helical membrane-spanning segments follow: residues 32-52 (IVGTVVGITVLVVVALLVPVP), 64-84 (LGAWFPLAFLLVHTVVTVPPF), 88-108 (AFTLAAGLLFGSVVGVFIAVV), 149-169 (WLAILSLRLIPVVPFAAINYA), 177-197 (ILSFAWATLAGLLPGTAAVVI), and 209-229 (LLILVSVCTGALGLTGLVYEI).

It belongs to the TVP38/TMEM64 family.

It localises to the cell membrane. The protein is TVP38/TMEM64 family membrane protein Mb1528c of Mycobacterium bovis (strain ATCC BAA-935 / AF2122/97).